Reading from the N-terminus, the 505-residue chain is Cyanidin 3-O-glucoside 7-O-glucosyltransferase (acyl-glucose) (505 aa).

The first 25 residues, 1–25, serve as a signal peptide directing secretion; sequence MCPSFLVTLLLLQLSSLVVVLVVWA. A beta-D-glucoside contacts are provided by residues Q52, H152, and 197-198; that span reads NE. Catalysis depends on E198, which acts as the Proton donor. C217 and C225 form a disulfide bridge. 3 N-linked (GlcNAc...) asparagine glycosylation sites follow: N224, N229, and N324. Positions 341 and 403 each coordinate a beta-D-glucoside. E403 acts as the Nucleophile in catalysis. N-linked (GlcNAc...) asparagine glycans are attached at residues N411 and N437. W447 and Y463 together coordinate a beta-D-glucoside. N-linked (GlcNAc...) asparagine glycosylation is present at N494.

It belongs to the glycosyl hydrolase 1 family.

It localises to the vacuole. It catalyses the reaction 1-O-(4-hydroxy-3-methoxybenzoyl)-beta-D-glucose + cyanidin 3-O-beta-D-glucoside = cyanidin 3,7-di-O-beta-D-glucoside + vanillate. The protein operates within pigment biosynthesis; anthocyanin biosynthesis. Its function is as follows. Beta-glycosidase that catalyzes the transfer of glucose moiety to anthocyanidin 3-glucoside at the 7 position. Anthocyanins are ubiquitous colored pigments that are responsible for variations in petal color. The polypeptide is Cyanidin 3-O-glucoside 7-O-glucosyltransferase (acyl-glucose) (AA7GT) (Delphinium grandiflorum (Siberian larkspur)).